A 228-amino-acid polypeptide reads, in one-letter code: NADH-quinone oxidoreductase subunit C (228 aa).

The protein belongs to the complex I 30 kDa subunit family. In terms of assembly, NDH-1 is composed of 14 different subunits. Subunits NuoB, C, D, E, F, and G constitute the peripheral sector of the complex.

It localises to the cell membrane. It catalyses the reaction a quinone + NADH + 5 H(+)(in) = a quinol + NAD(+) + 4 H(+)(out). In terms of biological role, NDH-1 shuttles electrons from NADH, via FMN and iron-sulfur (Fe-S) centers, to quinones in the respiratory chain. The immediate electron acceptor for the enzyme in this species is believed to be a menaquinone. Couples the redox reaction to proton translocation (for every two electrons transferred, four hydrogen ions are translocated across the cytoplasmic membrane), and thus conserves the redox energy in a proton gradient. The chain is NADH-quinone oxidoreductase subunit C from Mycobacteroides abscessus (strain ATCC 19977 / DSM 44196 / CCUG 20993 / CIP 104536 / JCM 13569 / NCTC 13031 / TMC 1543 / L948) (Mycobacterium abscessus).